Consider the following 318-residue polypeptide: GTP 3',8-cyclase (318 aa).

Residues 5-217 (KFERKIDYIR…DKIAKKYKFK (213 aa)) enclose the Radical SAM core domain. Residue Arg14 coordinates GTP. 2 residues coordinate [4Fe-4S] cluster: Cys21 and Cys25. Tyr27 serves as a coordination point for S-adenosyl-L-methionine. Residue Cys28 coordinates [4Fe-4S] cluster. Arg64 provides a ligand contact to GTP. An S-adenosyl-L-methionine-binding site is contributed by Gly68. GTP is bound at residue Thr95. Ser119 serves as a coordination point for S-adenosyl-L-methionine. A GTP-binding site is contributed by Lys155. Residue Met189 coordinates S-adenosyl-L-methionine. Positions 248 and 251 each coordinate [4Fe-4S] cluster. Position 253-255 (253-255 (RIR)) interacts with GTP. Position 265 (Cys265) interacts with [4Fe-4S] cluster.

Belongs to the radical SAM superfamily. MoaA family. Monomer and homodimer. [4Fe-4S] cluster is required as a cofactor.

The catalysed reaction is GTP + AH2 + S-adenosyl-L-methionine = (8S)-3',8-cyclo-7,8-dihydroguanosine 5'-triphosphate + 5'-deoxyadenosine + L-methionine + A + H(+). It participates in cofactor biosynthesis; molybdopterin biosynthesis. Its function is as follows. Catalyzes the cyclization of GTP to (8S)-3',8-cyclo-7,8-dihydroguanosine 5'-triphosphate. This Nautilia profundicola (strain ATCC BAA-1463 / DSM 18972 / AmH) protein is GTP 3',8-cyclase.